The sequence spans 152 residues: D-aminoacyl-tRNA deacylase (152 aa).

A Gly-cisPro motif, important for rejection of L-amino acids motif is present at residues 137–138 (GP).

Belongs to the DTD family. As to quaternary structure, homodimer.

Its subcellular location is the cytoplasm. The enzyme catalyses glycyl-tRNA(Ala) + H2O = tRNA(Ala) + glycine + H(+). It catalyses the reaction a D-aminoacyl-tRNA + H2O = a tRNA + a D-alpha-amino acid + H(+). Functionally, an aminoacyl-tRNA editing enzyme that deacylates mischarged D-aminoacyl-tRNAs. Also deacylates mischarged glycyl-tRNA(Ala), protecting cells against glycine mischarging by AlaRS. Acts via tRNA-based rather than protein-based catalysis; rejects L-amino acids rather than detecting D-amino acids in the active site. By recycling D-aminoacyl-tRNA to D-amino acids and free tRNA molecules, this enzyme counteracts the toxicity associated with the formation of D-aminoacyl-tRNA entities in vivo and helps enforce protein L-homochirality. The chain is D-aminoacyl-tRNA deacylase from Geobacillus sp. (strain WCH70).